The sequence spans 70 residues: Protein SlyX homolog (70 aa).

Belongs to the SlyX family.

This Shewanella sp. (strain MR-7) protein is Protein SlyX homolog.